Reading from the N-terminus, the 813-residue chain is LPS-assembly protein LptD (813 aa).

The N-terminal stretch at 1-22 (MRRALRLLPLPLSIAICLPAMA) is a signal peptide.

This sequence belongs to the LptD family. Component of the lipopolysaccharide transport and assembly complex. Interacts with LptE and LptA.

Its subcellular location is the cell outer membrane. Functionally, together with LptE, is involved in the assembly of lipopolysaccharide (LPS) at the surface of the outer membrane. This Xanthomonas axonopodis pv. citri (strain 306) protein is LPS-assembly protein LptD.